A 337-amino-acid polypeptide reads, in one-letter code: Fructose-1,6-bisphosphatase class 1 (337 aa).

Residues Glu-89, Asp-112, Leu-114, and Asp-115 each contribute to the Mg(2+) site. Substrate contacts are provided by residues 115-118 (DGSS), Asn-208, Tyr-241, and Lys-271. Residue Glu-277 participates in Mg(2+) binding.

It belongs to the FBPase class 1 family. In terms of assembly, homotetramer. Mg(2+) is required as a cofactor.

It localises to the cytoplasm. It catalyses the reaction beta-D-fructose 1,6-bisphosphate + H2O = beta-D-fructose 6-phosphate + phosphate. The protein operates within carbohydrate biosynthesis; gluconeogenesis. The chain is Fructose-1,6-bisphosphatase class 1 from Psychromonas ingrahamii (strain DSM 17664 / CCUG 51855 / 37).